The following is a 513-amino-acid chain: Histone acetyltransferase KAT5 (513 aa).

The 58-residue stretch at 8–65 (IEGCRLPVLRRNQDNEDEWPLAEILSVKDISGRKLFYVHYIDFNKRLDEWVTHERLDL) folds into the Tudor-knot domain. N6-acetyllysine is present on K52. The segment at 69–106 (QFPKKEAKTPTKNGLPGSRPGSPEREVPASAQASGKTL) is disordered. Residue S86 is modified to Phosphoserine; by GSK3. Phosphoserine; by CDK1 and CDK9 is present on S90. 2 positions are modified to N6-acetyllysine; by autocatalysis: K104 and K120. The segment at 122 to 220 (REAIPGGEPD…RMTGSLVSDR (99 aa)) is disordered. A compositionally biased stretch (polar residues) spans 133-144 (PLSSSSCLQPNH). Residues K148, K150, K187, and K189 each carry the N6-acetyllysine; by autocatalysis modification. Position 199 is a phosphoserine (S199). One can recognise an MYST-type HAT domain in the interval 227–504 (TRMKNIECIE…IDSKCLHFTP (278 aa)). The segment at 260–285 (LYLCEFCLKYGRSLKCLQRHLTKCDL) adopts a C2HC MYST-type zinc-finger fold. The residue at position 327 (K327) is an N6-acetyllysine; by autocatalysis. The segment at 368–513 (ACILTLPPYQ…PKDWSKRGKW (146 aa)) is interaction with ATF2. Acetyl-CoA contacts are provided by residues 370-372 (ILT) and 377-383 (QRRGYGK). E403 (proton donor/acceptor) is an active-site residue. Acetyl-CoA-binding residues include S407 and S416. A Glycyl lysine isopeptide (Lys-Gly) (interchain with G-Cter in SUMO1); alternate cross-link involves residue K430. A Glycyl lysine isopeptide (Lys-Gly) (interchain with G-Cter in SUMO2); alternate cross-link involves residue K430. K451 is covalently cross-linked (Glycyl lysine isopeptide (Lys-Gly) (interchain with G-Cter in SUMO1)).

It belongs to the MYST (SAS/MOZ) family. In terms of assembly, component of the NuA4 histone acetyltransferase complex which contains the catalytic subunit KAT5/TIP60 and the subunits EP400, TRRAP/PAF400, BRD8/SMAP, EPC1, DMAP1/DNMAP1, RUVBL1/TIP49, RUVBL2, ING3, actin, ACTL6A/BAF53A, MORF4L1/MRG15, MORF4L2/MRGX, MRGBP, YEATS4/GAS41, VPS72/YL1 and MEAF6. KAT5/TIP60, EPC1, and ING3 together constitute a minimal HAT complex termed Piccolo NuA4. The NuA4 complex interacts with MYC. Interacts with ATM. Interacts with JADE1. Interacts with PLA2G4A/CPLA2, EDNRA and HDAC7. Interacts with the cytoplasmic tail of APP and APBB1/FE65. Interacts with TRIM24 and TRIM68. Forms a complex with SENP6 and UBE2I in response to UV irradiation. Identified in a complex with HINT1. Interacts with ATF2 and CUL3. Interacts with NR1D2 (via N-terminus). Component of a SWR1-like complex. Interacts with FOXP3. Interacts with ZBTB49. Interacts with SRF. Interacts with ATF3; promoting autoacetylation and deubiquitination by USP7. Interacts with EP300/p300; interaction promotes KAT5 autoacetylation. Interacts with PRKDC; interaction is impaired following KAT5 sumoylation. Interacts with GPR50. Interacts with NME3; this interaction enables recruitment of NME3 at DNA damage sites where it plays a role in the repair of DNA. As to quaternary structure, (Microbial infection) Interacts with HIV-1 TAT. Post-translationally, phosphorylated on Ser-86 and Ser-90; enhanced during G2/M phase. The phosphorylated form has a higher activity. Phosphorylation at Ser-90 by CDK1 or CDK9 is a prerequisite for phosphorylation at Ser-86 by GSK3. Phosphorylation at Ser-86 by GSK3 (GSK3A or GSK3B) activates acetyltransferase and acyltransferase activities. Phosphorylation at Ser-90 by CDK9 promotes KAT5 recruitment to chromatin. Phosphorylation by VRK1 following DNA damage promotes KAT5 association with chromatin and histone acetyltransferase activity. Autoacetylated. Autoacetylation is required for histone acetyltransferase activity. Autoacetylation at Lys-327 is facilitated by interaction with EP300/p300: it prevents ubiquitination and subsequent degradation by the proteasome and promotes acetylation of target proteins. Deacetylated by HDAC3 and SIRT1. Deacetylation by HDAC3 promotes its ubiquitination and cytoplasmic localization. In terms of processing, sumoylated by UBE2I at Lys-430 and Lys-451, leading to increase of its histone acetyltransferase activity in UV-induced DNA damage response, as well as its translocation to nuclear bodies. Sumoylation with SUMO2 by PIAS4 at Lys-430 promotes repair of DNA double-strand breaks (DSBs) via homologous recombination (HR). Sumoylation by PIAS4 impairs interaction with PRKDC, inhibiting non-homologous end joining (NHEJ)-mediated repair of DSBs, thereby facilitating HR. Desumoylated by SENP3. Post-translationally, ubiquitinated by MDM2, leading to its proteasome-dependent degradation. Ubiquitination is prevented by autoacetylation at Lys-327. Ubiquitinated following deacetylation by HDAC3, leading to cytoplasmic localization. Deubiquitinated by USP7 following interaction with ATF3, promoting its stabilization. (Microbial infection) In case of HIV-1 infection, interaction with the viral Tat protein leads to KAT5 polyubiquitination and targets it to degradation.

The protein resides in the nucleus. It localises to the chromosome. The protein localises to the cytoplasm. Its subcellular location is the centromere. It is found in the kinetochore. The protein resides in the cytoskeleton. It localises to the spindle pole. The protein localises to the nucleolus. Its subcellular location is the perinuclear region. It catalyses the reaction L-lysyl-[histone] + acetyl-CoA = N(6)-acetyl-L-lysyl-[histone] + CoA + H(+). It carries out the reaction L-lysyl-[protein] + acetyl-CoA = N(6)-acetyl-L-lysyl-[protein] + CoA + H(+). The enzyme catalyses (2E)-butenoyl-CoA + L-lysyl-[protein] = N(6)-(2E)-butenoyl-L-lysyl-[protein] + CoA + H(+). The catalysed reaction is 2-hydroxyisobutanoyl-CoA + L-lysyl-[protein] = N(6)-(2-hydroxyisobutanoyl)-L-lysyl-[protein] + CoA + H(+). It catalyses the reaction (S)-lactoyl-CoA + L-lysyl-[protein] = N(6)-[(S)-lactoyl]-L-lysyl-[protein] + CoA + H(+). Acyltransferase and acetyltransferase activities are activated by phosphorylation and autoacetylation. Autoacetylation activates the histone acetyltransferase activity. Catalytic subunit of the NuA4 histone acetyltransferase complex, a multiprotein complex involved in transcriptional activation of select genes principally by acetylation of nucleosomal histones H2A and H4. Histone acetylation alters nucleosome-DNA interactions and promotes interaction of the modified histones with other proteins which positively regulate transcription. The NuA4 histone acetyltransferase complex is required for the activation of transcriptional programs associated with proto-oncogene mediated growth induction, tumor suppressor mediated growth arrest and replicative senescence, apoptosis, and DNA repair. The NuA4 complex plays a direct role in repair of DNA double-strand breaks (DSBs) by promoting homologous recombination (HR): the complex inhibits TP53BP1 binding to chromatin via MBTD1, which recognizes and binds histone H4 trimethylated at 'Lys-20' (H4K20me), and KAT5 that catalyzes acetylation of 'Lys-15' of histone H2A (H2AK15ac), thereby blocking the ubiquitination mark required for TP53BP1 localization at DNA breaks. Also involved in DSB repair by mediating acetylation of 'Lys-5' of histone H2AX (H2AXK5ac), promoting NBN/NBS1 assembly at the sites of DNA damage. The NuA4 complex plays a key role in hematopoietic stem cell maintenance and is required to maintain acetylated H2A.Z/H2AZ1 at MYC target genes. The NuA4 complex is also required for spermatid development by promoting acetylation of histones: histone hyperacetylation is required for histone replacement during the transition from round to elongating spermatids. Component of a SWR1-like complex that specifically mediates the removal of histone H2A.Z/H2AZ1 from the nucleosome. Also acetylates non-histone proteins, such as BMAL1, ATM, AURKB, CHKA, CGAS, ERCC4/XPF, LPIN1, TP53/p53, NDC80/HEC1, NR1D2, RAN, SOX4, FOXP3, SQSTM1, ULK1 and RUBCNL/Pacer. Directly acetylates and activates ATM. Promotes nucleotide excision repair (NER) by mediating acetylation of ERCC4/XPF, thereby promoting formation of the ERCC4-ERCC1 complex. Relieves NR1D2-mediated inhibition of APOC3 expression by acetylating NR1D2. Acts as a regulator of regulatory T-cells (Treg) by catalyzing FOXP3 acetylation, thereby promoting FOXP3 transcriptional repressor activity. Involved in skeletal myoblast differentiation by mediating acetylation of SOX4. Catalyzes acetylation of APBB1/FE65, increasing its transcription activator activity. Promotes transcription elongation during the activation phase of the circadian cycle by catalyzing acetylation of BMAL1, promoting elongation of circadian transcripts. Together with GSK3 (GSK3A or GSK3B), acts as a regulator of autophagy: phosphorylated at Ser-86 by GSK3 under starvation conditions, leading to activate acetyltransferase activity and promote acetylation of key autophagy regulators, such as ULK1 and RUBCNL/Pacer. Acts as a regulator of the cGAS-STING innate antiviral response by catalyzing acetylation the N-terminus of CGAS, thereby promoting CGAS DNA-binding and activation. Also regulates lipid metabolism by mediating acetylation of CHKA or LPIN1. Promotes lipolysis of lipid droplets following glucose deprivation by mediating acetylation of isoform 1 of CHKA, thereby promoting monomerization of CHKA and its conversion into a tyrosine-protein kinase. Acts as a regulator of fatty-acid-induced triacylglycerol synthesis by catalyzing acetylation of LPIN1, thereby promoting the synthesis of diacylglycerol. In addition to protein acetyltransferase, can use different acyl-CoA substrates, such as (2E)-butenoyl-CoA (crotonyl-CoA), S-lactoyl-CoA (lactyl-CoA) and 2-hydroxyisobutanoyl-CoA (2-hydroxyisobutyryl-CoA), and is able to mediate protein crotonylation, lactylation and 2-hydroxyisobutyrylation, respectively. Acts as a key regulator of chromosome segregation and kinetochore-microtubule attachment during mitosis by mediating acetylation or crotonylation of target proteins. Catalyzes acetylation of AURKB at kinetochores, increasing AURKB activity and promoting accurate chromosome segregation in mitosis. Acetylates RAN during mitosis, promoting microtubule assembly at mitotic chromosomes. Acetylates NDC80/HEC1 during mitosis, promoting robust kinetochore-microtubule attachment. Catalyzes crotonylation of MAPRE1/EB1, thereby ensuring accurate spindle positioning in mitosis. Catalyzes lactylation of NBN/NBS1 in response to DNA damage, thereby promoting DNA double-strand breaks (DSBs) via homologous recombination (HR). Its function is as follows. (Microbial infection) Catalyzes the acetylation of flavivirus NS3 protein to modulate their RNA-binding and -unwinding activities leading to facilitate viral replication. This Homo sapiens (Human) protein is Histone acetyltransferase KAT5.